A 231-amino-acid polypeptide reads, in one-letter code: Ribonuclease 3 (231 aa).

The 130-residue stretch at 5 to 134 folds into the RNase III domain; it reads QEKLKNDYGL…FLGALFIDQG (130 aa). A Mg(2+)-binding site is contributed by glutamate 47. Aspartate 51 is an active-site residue. Residues asparagine 120 and glutamate 123 each contribute to the Mg(2+) site. Glutamate 123 is an active-site residue. Residues 160–229 form the DRBM domain; sequence DYKTELQEVL…AENAIKGQNH (70 aa).

It belongs to the ribonuclease III family. As to quaternary structure, homodimer. It depends on Mg(2+) as a cofactor.

The protein localises to the cytoplasm. It carries out the reaction Endonucleolytic cleavage to 5'-phosphomonoester.. Its function is as follows. Digests double-stranded RNA. Involved in the processing of primary rRNA transcript to yield the immediate precursors to the large and small rRNAs (23S and 16S). Processes some mRNAs, and tRNAs when they are encoded in the rRNA operon. Processes pre-crRNA and tracrRNA of type II CRISPR loci if present in the organism. The protein is Ribonuclease 3 of Lactococcus lactis subsp. cremoris (strain SK11).